The following is a 424-amino-acid chain: MTAITDIIAREILDSRGNPTVEVDVLLEDGSFGRAAVPSGASTGAHEAVEMRDGGERYGGKGVLKACDLVEGEIFEAIAGMDAEDQRRIDEAMIELDGTANKSRLGANAMLGVSLAAAHAAADVQGLPLYRYIGGMNARVLPTPMMNIINGGAHADNPIDFQEFMIMPVGLPSFSEALRCGAEVFHALKSRLKADGLNTNVGDEGGFAPHLRSAEQALDVIMDAIEAAGYKPGEDVALALDVASTEFYKDGQYVLEGADESHDAEGFSQYLEKLVNKYPIVSIEDGMAEDDWDGWRALTQRLDGRCQLVGDDLFVTNPERLAKGIETGAANAILVKVNQIGTLSETLDAVDMALRSGYGAVMSHRSGETEDATIADLAVATNCGQIKTGSLARSDRTAKYNQLLRIESLLGETGMFAGPSGLAS.

Gln-162 is a (2R)-2-phosphoglycerate binding site. Catalysis depends on Glu-204, which acts as the Proton donor. Mg(2+) contacts are provided by Asp-241, Glu-284, and Asp-311. Residues Lys-336, Arg-365, Ser-366, and Lys-387 each coordinate (2R)-2-phosphoglycerate. Catalysis depends on Lys-336, which acts as the Proton acceptor.

This sequence belongs to the enolase family. It depends on Mg(2+) as a cofactor.

It is found in the cytoplasm. It localises to the secreted. The protein resides in the cell surface. It catalyses the reaction (2R)-2-phosphoglycerate = phosphoenolpyruvate + H2O. The protein operates within carbohydrate degradation; glycolysis; pyruvate from D-glyceraldehyde 3-phosphate: step 4/5. Functionally, catalyzes the reversible conversion of 2-phosphoglycerate (2-PG) into phosphoenolpyruvate (PEP). It is essential for the degradation of carbohydrates via glycolysis. The protein is Enolase of Maricaulis maris (strain MCS10) (Caulobacter maris).